A 211-amino-acid chain; its full sequence is Large ribosomal subunit protein bL25 (211 aa).

Residues 175-211 form a disordered region; sequence VSEPVEQDLGEESETEEEGAEGEKPAESTGEEPGDDE. Acidic residues predominate over residues 179-194; sequence VEQDLGEESETEEEGA.

This sequence belongs to the bacterial ribosomal protein bL25 family. CTC subfamily. As to quaternary structure, part of the 50S ribosomal subunit; part of the 5S rRNA/L5/L18/L25 subcomplex. Contacts the 5S rRNA. Binds to the 5S rRNA independently of L5 and L18.

In terms of biological role, this is one of the proteins that binds to the 5S RNA in the ribosome where it forms part of the central protuberance. The chain is Large ribosomal subunit protein bL25 from Kocuria rhizophila (strain ATCC 9341 / DSM 348 / NBRC 103217 / DC2201).